A 658-amino-acid polypeptide reads, in one-letter code: tRNA 5-methylaminomethyl-2-thiouridine biosynthesis bifunctional protein MnmC (658 aa).

Positions 1 to 236 (MIPELPHAQL…KWEVLRGEFL (236 aa)) are tRNA (mnm(5)s(2)U34)-methyltransferase. The segment at 265-658 (IGGGLAGCAS…ALRRLIRGKA (394 aa)) is FAD-dependent cmnm(5)s(2)U34 oxidoreductase.

This sequence in the N-terminal section; belongs to the methyltransferase superfamily. tRNA (mnm(5)s(2)U34)-methyltransferase family. The protein in the C-terminal section; belongs to the DAO family. The cofactor is FAD.

It is found in the cytoplasm. It carries out the reaction 5-aminomethyl-2-thiouridine(34) in tRNA + S-adenosyl-L-methionine = 5-methylaminomethyl-2-thiouridine(34) in tRNA + S-adenosyl-L-homocysteine + H(+). In terms of biological role, catalyzes the last two steps in the biosynthesis of 5-methylaminomethyl-2-thiouridine (mnm(5)s(2)U) at the wobble position (U34) in tRNA. Catalyzes the FAD-dependent demodification of cmnm(5)s(2)U34 to nm(5)s(2)U34, followed by the transfer of a methyl group from S-adenosyl-L-methionine to nm(5)s(2)U34, to form mnm(5)s(2)U34. The polypeptide is tRNA 5-methylaminomethyl-2-thiouridine biosynthesis bifunctional protein MnmC (Pseudomonas fluorescens (strain ATCC BAA-477 / NRRL B-23932 / Pf-5)).